Reading from the N-terminus, the 318-residue chain is Cytochrome c biogenesis protein CcsA (318 aa).

8 helical membrane passes run 17–37, 45–65, 75–95, 104–124, 149–169, 224–244, 258–275, and 287–307; these read VLAL…ISFW, SAVV…QLVL, ISNL…AQLL, IVSA…SFAL, VIMC…AVLF, TITV…VWAN, TWAL…HTRF, and VAVA…LLGI.

The protein belongs to the CcmF/CycK/Ccl1/NrfE/CcsA family. May interact with ccs1.

It is found in the cellular thylakoid membrane. Its function is as follows. Required during biogenesis of c-type cytochromes (cytochrome c6 and cytochrome f) at the step of heme attachment. The polypeptide is Cytochrome c biogenesis protein CcsA (Prochlorococcus marinus (strain MIT 9313)).